Reading from the N-terminus, the 283-residue chain is uncharacterized protein (283 aa).

The segment covering 1–10 (MELNKTSESL) has biased composition (polar residues). Disordered stretches follow at residues 1-99 (MELN…NPTS) and 255-283 (DQEG…EAHI). 3 stretches are compositionally biased toward basic and acidic residues: residues 14 to 34 (KIDH…REVR), 42 to 53 (SSTRQEKADRMP), and 61 to 71 (ESSKGSEEGAV).

Belongs to the chlamydial CPn_0705/CT_671/TC_0042 family.

This is an uncharacterized protein from Chlamydia trachomatis serovar D (strain ATCC VR-885 / DSM 19411 / UW-3/Cx).